The following is a 55-amino-acid chain: ATP synthase F(0) complex subunit 8 (55 aa).

Residues 10–32 (FFTMLTTWLTFLLLIQPKLLSFI) form a helical membrane-spanning segment.

Belongs to the ATPase protein 8 family. As to quaternary structure, component of the ATP synthase complex composed at least of ATP5F1A/subunit alpha, ATP5F1B/subunit beta, ATP5MC1/subunit c (homooctomer), MT-ATP6/subunit a, MT-ATP8/subunit 8, ATP5ME/subunit e, ATP5MF/subunit f, ATP5MG/subunit g, ATP5MK/subunit k, ATP5MJ/subunit j, ATP5F1C/subunit gamma, ATP5F1D/subunit delta, ATP5F1E/subunit epsilon, ATP5PF/subunit F6, ATP5PB/subunit b, ATP5PD/subunit d, ATP5PO/subunit OSCP. ATP synthase complex consists of a soluble F(1) head domain (subunits alpha(3) and beta(3)) - the catalytic core - and a membrane F(0) domain - the membrane proton channel (subunits c, a, 8, e, f, g, k and j). These two domains are linked by a central stalk (subunits gamma, delta, and epsilon) rotating inside the F1 region and a stationary peripheral stalk (subunits F6, b, d, and OSCP).

The protein resides in the mitochondrion membrane. Functionally, subunit 8, of the mitochondrial membrane ATP synthase complex (F(1)F(0) ATP synthase or Complex V) that produces ATP from ADP in the presence of a proton gradient across the membrane which is generated by electron transport complexes of the respiratory chain. ATP synthase complex consist of a soluble F(1) head domain - the catalytic core - and a membrane F(1) domain - the membrane proton channel. These two domains are linked by a central stalk rotating inside the F(1) region and a stationary peripheral stalk. During catalysis, ATP synthesis in the catalytic domain of F(1) is coupled via a rotary mechanism of the central stalk subunits to proton translocation. In vivo, can only synthesize ATP although its ATP hydrolase activity can be activated artificially in vitro. Part of the complex F(0) domain. The protein is ATP synthase F(0) complex subunit 8 of Guira guira (Guira cuckoo).